The primary structure comprises 217 residues: Small ribosomal subunit protein uS3 (217 aa).

The 69-residue stretch at 38 to 106 folds into the KH type-2 domain; sequence IRNFIKKELA…QVHINIIEIK (69 aa).

The protein belongs to the universal ribosomal protein uS3 family. In terms of assembly, part of the 30S ribosomal subunit. Forms a tight complex with proteins S10 and S14.

In terms of biological role, binds the lower part of the 30S subunit head. Binds mRNA in the 70S ribosome, positioning it for translation. The chain is Small ribosomal subunit protein uS3 from Streptococcus suis (strain 98HAH33).